The sequence spans 398 residues: 1-deoxy-D-xylulose 5-phosphate reductoisomerase (398 aa).

NADPH-binding residues include Thr-10, Gly-11, Ser-12, Ile-13, Gly-36, Lys-37, Asn-38, and Asn-124. Residue Lys-125 participates in 1-deoxy-D-xylulose 5-phosphate binding. Residue Glu-126 participates in NADPH binding. Asp-150 contributes to the Mn(2+) binding site. The 1-deoxy-D-xylulose 5-phosphate site is built by Ser-151, Glu-152, Ser-186, and His-209. Glu-152 is a Mn(2+) binding site. Gly-215 contributes to the NADPH binding site. Residues Ser-222, Asn-227, Lys-228, and Glu-231 each contribute to the 1-deoxy-D-xylulose 5-phosphate site. Glu-231 contacts Mn(2+).

This sequence belongs to the DXR family. In terms of assembly, homodimer. Mg(2+) is required as a cofactor. The cofactor is Mn(2+). Requires Co(2+) as cofactor.

The catalysed reaction is 2-C-methyl-D-erythritol 4-phosphate + NADP(+) = 1-deoxy-D-xylulose 5-phosphate + NADPH + H(+). The protein operates within isoprenoid biosynthesis; isopentenyl diphosphate biosynthesis via DXP pathway; isopentenyl diphosphate from 1-deoxy-D-xylulose 5-phosphate: step 1/6. With respect to regulation, inhibited by fosmidomycin. In terms of biological role, catalyzes the NADPH-dependent rearrangement and reduction of 1-deoxy-D-xylulose-5-phosphate (DXP) to 2-C-methyl-D-erythritol 4-phosphate (MEP). The polypeptide is 1-deoxy-D-xylulose 5-phosphate reductoisomerase (dxr) (Escherichia coli (strain K12)).